Here is a 399-residue protein sequence, read N- to C-terminus: Serine palmitoyltransferase (399 aa).

Pyridoxal 5'-phosphate-binding positions include 113-114 (GF), H213, T241, and S243. K244 carries the N6-(pyridoxal phosphate)lysine modification.

It belongs to the class-II pyridoxal-phosphate-dependent aminotransferase family. As to quaternary structure, homodimer. The cofactor is pyridoxal 5'-phosphate.

It localises to the cytoplasm. The catalysed reaction is L-serine + hexadecanoyl-CoA + H(+) = 3-oxosphinganine + CO2 + CoA. It functions in the pathway lipid metabolism; sphingolipid metabolism. Catalyzes the condensation of L-serine with palmitoyl-CoA (hexadecanoyl-CoA) to produce 3-oxosphinganine. This chain is Serine palmitoyltransferase, found in Sphingobacterium spiritivorum (Flavobacterium spiritivorum).